We begin with the raw amino-acid sequence, 226 residues long: PKHD-type hydroxylase Sde_2812 (226 aa).

A Fe2OG dioxygenase domain is found at 78 to 178 (KIFPPLFNCY…RLASFFWLQS (101 aa)). Positions 96, 98, and 159 each coordinate Fe cation. Position 169 (Arg169) interacts with 2-oxoglutarate.

Fe(2+) serves as cofactor. It depends on L-ascorbate as a cofactor.

This chain is PKHD-type hydroxylase Sde_2812, found in Saccharophagus degradans (strain 2-40 / ATCC 43961 / DSM 17024).